The primary structure comprises 302 residues: Short-chain dehydrogenase/reductase 3 (302 aa).

The next 4 helical transmembrane spans lie at 9 to 29 (LVMF…GLVL), 170 to 190 (IVCL…DYCT), 195 to 215 (AFAF…VSAT), and 253 to 273 (AVQL…LVIL). Ser-175 provides a ligand contact to substrate. Tyr-188 serves as the catalytic Proton acceptor.

The protein belongs to the short-chain dehydrogenases/reductases (SDR) family. As to expression, widely expressed with highest levels found in heart, placenta, lung, liver, kidney, pancreas, thyroid, testis, stomach, trachea and spinal cord. Lower levels found in skeletal muscle, intestine and lymph node. No expression detected in brain. In the retina, expressed in cone but not rod outer segments.

It localises to the membrane. The catalysed reaction is all-trans-retinol + NADP(+) = all-trans-retinal + NADPH + H(+). Functionally, catalyzes the reduction of all-trans-retinal to all-trans-retinol in the presence of NADPH. The protein is Short-chain dehydrogenase/reductase 3 (DHRS3) of Homo sapiens (Human).